The sequence spans 470 residues: Putative gustatory receptor 28b (470 aa).

At 1–76 the chain is on the cytoplasmic side; that stretch reads MDIEMAKEPV…KTGKKAIKKT (76 aa). The helical transmembrane segment at 77–97 threads the bilayer; sequence IFGYINGIMHIAMFVFAYSLT. The Extracellular portion of the chain corresponds to 98–119; that stretch reads IYNNCESVASYFFRSRITYFGD. A helical transmembrane segment spans residues 120-140; it reads LMQIVSGFIGVTVIYLTAFVP. Over 141-175 the chain is Cytoplasmic; sequence NHRLERCLQKFHTMDVQLQTVGVKIMYSKVLRFSY. The chain crosses the membrane as a helical span at residues 176-196; it reads MVLISMFLVNVLFTGGTFSVL. The Extracellular portion of the chain corresponds to 197–204; it reads YSSEVAPT. A helical membrane pass occupies residues 205 to 225; sequence MALHFTFLIQHTVIAIAIALF. Topologically, residues 226-309 are cytoplasmic; it reads SCFTYLVEMR…ATANKYFTYQ (84 aa). Residues 310–330 form a helical membrane-spanning segment; that stretch reads LLTIISIAFLIIVFDAYYVLE. The Extracellular portion of the chain corresponds to 331–346; sequence TLLGKSKRESKFKTVE. A helical transmembrane segment spans residues 347–367; that stretch reads FVTFFSCQMILYLIAIISIVE. Over 368–423 the chain is Cytoplasmic; sequence GSNRAIKKSEKTGGIVHSLLNKTKSAEVKEKLQQFSMQLMHLKINFTAAGLFNIDR. A helical membrane pass occupies residues 424 to 444; sequence TLYFTISGALTTYLIILLQFT. Over 445 to 470 the chain is Extracellular; it reads SNSPNNGYGNGSSCCETFNNMTNHTL. N-linked (GlcNAc...) asparagine glycosylation is found at Asn-454, Asn-464, and Asn-467.

The protein belongs to the insect chemoreceptor superfamily. Gustatory receptor (GR) family. Gr66a subfamily. As to expression, isoforms A and E have taste neuron-specific expression restricted to the labial palps, the internal taste organs in the pharynx, and the legs. In addition to expression in a large number of taste neurons, isoform A is also expressed in a few nonchemosensory neurons, including the campaniform sensilla of the wing, leg stretch receptors, and multiple dendritic neurons in the abdomen. Isoform B is the only receptor not expressed in gustatory receptor neurons in the labellum. We observe expression of this receptor in a single large cell at the base of each maxillary palp, in campaniform sensilla of the wing, and multiple dendritic neurons in the abdomen. Isoform C is expressed by many gustatory receptor neurons in the labial palps, the pharyngeal taste clusters, and taste neurons in the legs. In addition, isoform C expressed in a single cell at the base of the maxillary palps, neurons in the Johnston's organ (JO), campaniform sensilla of the wing, stretch receptors and the femoral chordotonal organ of the legs, and multiple dendritic neurons in the abdomen. Isoform D is expressed in a small number of gustatory receptor neurons in the labial palps, the ventral cibarial sense organ (VCSO), and legs. Atypical expression is observed in three neurons in the arista, campaniform sensilla of the wing, stretch and femoral chordotonal organ receptors in the legs, and multiple dendritic neurons in the abdomen. In larvae, Isoform A is expressed in neurons of the terminal external chemosensory organ and the dorsal external chemosensory organ; and isoform E is expressed in neurons of the terminal external chemosensory organ.

The protein localises to the cell membrane. Its function is as follows. Probable gustatory receptor which mediates acceptance or avoidance behavior, depending on its substrates. Atypical expression also suggests nongustatory roles in the nervous system and tissues involved in proprioception, hygroreception, and other sensory modalities. It is also possible that it has chemosensory roles in the detection of internal ligands. The protein is Putative gustatory receptor 28b (Gr28b) of Drosophila melanogaster (Fruit fly).